A 193-amino-acid polypeptide reads, in one-letter code: UPF0301 protein Fphi_1754 (193 aa).

Belongs to the UPF0301 (AlgH) family.

In Francisella philomiragia subsp. philomiragia (strain ATCC 25017 / CCUG 19701 / FSC 153 / O#319-036), this protein is UPF0301 protein Fphi_1754.